The following is a 424-amino-acid chain: 2,3-bisphosphoglycerate-independent phosphoglycerate mutase (424 aa).

The protein belongs to the BPG-independent phosphoglycerate mutase family. A-PGAM subfamily.

It carries out the reaction (2R)-2-phosphoglycerate = (2R)-3-phosphoglycerate. It functions in the pathway carbohydrate degradation; glycolysis; pyruvate from D-glyceraldehyde 3-phosphate: step 3/5. Functionally, catalyzes the interconversion of 2-phosphoglycerate and 3-phosphoglycerate. This Aeropyrum pernix (strain ATCC 700893 / DSM 11879 / JCM 9820 / NBRC 100138 / K1) protein is 2,3-bisphosphoglycerate-independent phosphoglycerate mutase.